A 154-amino-acid chain; its full sequence is Ribonuclease H (154 aa).

The RNase H type-1 domain maps to 1–142 (MQKQIEIFTD…CDELAKKGAE (142 aa)). Aspartate 10, glutamate 48, aspartate 70, and aspartate 134 together coordinate Mg(2+).

This sequence belongs to the RNase H family. In terms of assembly, monomer. Mg(2+) serves as cofactor.

It localises to the cytoplasm. It catalyses the reaction Endonucleolytic cleavage to 5'-phosphomonoester.. Endonuclease that specifically degrades the RNA of RNA-DNA hybrids. The protein is Ribonuclease H of Haemophilus influenzae (strain 86-028NP).